Reading from the N-terminus, the 387-residue chain is Flap endonuclease 1 (387 aa).

The tract at residues methionine 1–glutamine 104 is N-domain. A Mg(2+)-binding site is contributed by aspartate 34. Position 70 (arginine 70) interacts with DNA. Positions 86, 158, 160, 179, and 181 each coordinate Mg(2+). The tract at residues lysine 122–tyrosine 253 is I-domain. Residue glutamate 158 participates in DNA binding. 2 residues coordinate DNA: glycine 231 and aspartate 233. Aspartate 233 provides a ligand contact to Mg(2+). Residues serine 332–lysine 387 form a disordered region. Positions threonine 338–phenylalanine 346 are interaction with PCNA. The span at alanine 361–aspartate 371 shows a compositional bias: basic and acidic residues. Positions aspartate 378–lysine 387 are enriched in low complexity.

Belongs to the XPG/RAD2 endonuclease family. FEN1 subfamily. Interacts with PCNA. Three molecules of FEN1 bind to one PCNA trimer with each molecule binding to one PCNA monomer. PCNA stimulates the nuclease activity without altering cleavage specificity. It depends on Mg(2+) as a cofactor. Post-translationally, phosphorylated. Phosphorylation upon DNA damage induces relocalization to the nuclear plasma.

The protein localises to the nucleus. The protein resides in the nucleolus. Its subcellular location is the nucleoplasm. It is found in the mitochondrion. Its function is as follows. Structure-specific nuclease with 5'-flap endonuclease and 5'-3' exonuclease activities involved in DNA replication and repair. During DNA replication, cleaves the 5'-overhanging flap structure that is generated by displacement synthesis when DNA polymerase encounters the 5'-end of a downstream Okazaki fragment. It enters the flap from the 5'-end and then tracks to cleave the flap base, leaving a nick for ligation. Also involved in the long patch base excision repair (LP-BER) pathway, by cleaving within the apurinic/apyrimidinic (AP) site-terminated flap. Acts as a genome stabilization factor that prevents flaps from equilibrating into structures that lead to duplications and deletions. Also possesses 5'-3' exonuclease activity on nicked or gapped double-stranded DNA, and exhibits RNase H activity. Also involved in replication and repair of rDNA and in repairing mitochondrial DNA. This is Flap endonuclease 1 from Naegleria gruberi (Amoeba).